A 1001-amino-acid polypeptide reads, in one-letter code: MGSPEGEEAVVATAAVVEDGLRGNGDGGGGGVGEVVGVGRSIDMEWRKAEEAAIRRYEAANWLRRVVGVVCGKDLAEEPSEEEFRLGLRNGIVLCNALNKVQPGSVPKVVEAPSDSADGAALCAYQYFENVRNFLMGLQDLGLPTFEASDLEKGGKGVRVVDCVLSLRSFSESKQVGRSAPLKYGGILKPSMSGKHFIRKNSEPFVKTMVRSYSAELLRDGVSLEQSLGLDFSLEHVERTTPDSIRMLVQTMLSDKKPEEIPSLVESLLSRVIHEFERRTANQNESVKHALDPNDDKLLSRADTPPEMESTCTCSTGNMDEEDHTSVSMKEEVSTAVLVNGENVVEHIQAKQTDKYFDQQQKHIKDLKSNLATMKSGMEHIKLQYSEDLDKLGKHVHTLSHAASGYHKVLEENRKLYNQIQDLRGNIRVYCRVRPFLPGKVSSSSSVAGLEDRTITVMTPSKHGKDARKSFTFNRVFGPLATQEQVFADMQPLIRSVLDGYNVCIFAYGQTGSGKTFTMSGPKVLTEEGLGVNYRALNDLFNIQAQRKDTFCYEISVQMIEIYNEQVRDLLQNETVDIKNSSQKGIAVPDANIVPVTSTSDVIDLMNLGQKNRAVCSTAMNDRSSRSHSCLTVHVQGRDLTSRTVLRGCMHLVDLAGSERVDKSEVVGDRLKEAQHINKSLAALGDVIASLAQKNAHVPYRNSKLTQLLQDSLGGQAKTLMFVHIAPEPDAIGESISTLKFAERVATVELGAAKSNKEGGEVKELKEQIACLKAALAKKDGETESIRSTQSSPDIYRMRMGSAPPAFRNPMEEVGNLETRSNGTPRQKKRNFELPDVENDTSSWLDTSSQKEAALGEWVNNSQFGSSNSLLELGPDATQDVVFYQRNSPEPQWSWAGSVATEDSDDFEVTTSCSSEQDMVRPTSAPKAPGSANGSASIARKAQPKGAKSTDIRSTNPAKRAAPLQKKINGPPSASTKNGKQLSLSAADGKRAPNGKVSAKK.

Residues 53-172 (AIRRYEAANW…CVLSLRSFSE (120 aa)) enclose the Calponin-homology (CH) domain. Residues 284–300 (NESVKHALDPNDDKLLS) show a composition bias toward basic and acidic residues. The segment at 284–322 (NESVKHALDPNDDKLLSRADTPPEMESTCTCSTGNMDEE) is disordered. The Kinesin motor domain maps to 426 to 748 (NIRVYCRVRP…LKFAERVATV (323 aa)). 509–516 (GQTGSGKT) provides a ligand contact to ATP. Residues 756–784 (NKEGGEVKELKEQIACLKAALAKKDGETE) adopt a coiled-coil conformation. Disordered regions lie at residues 804–830 (PPAF…QKKR) and 890–1001 (EPQW…SAKK). A compositionally biased stretch (polar residues) spans 972–984 (PSASTKNGKQLSL).

The protein belongs to the TRAFAC class myosin-kinesin ATPase superfamily. Kinesin family. KIN-14 subfamily.

The chain is Kinesin-like protein KIN-14P from Oryza sativa subsp. japonica (Rice).